Consider the following 254-residue polypeptide: MNDTLAITYSTPARLSEAEKLARQMKLPLVSLNSTDYSFLLVFTPAHLELRSTGTKAPGPLYVDFLKGATAHRRLFGGGRSQLIVRAVGLKSHPHPTILDLTAGLGRDAFVLANFGCDVLMIERNPVIALLLRDGLERAQSVEWFKSLKLELIEIDAQIYLSTLKKQFDVIYMDPMYPIRKKSALVKKEMRILRRLVGADDDAPQLLALALKKAKHRVVIKRPLLSNPLPGPAPDVVYEGKSSRFDVYLLKPSS.

S-adenosyl-L-methionine is bound by residues 107 to 108 (RD), 123 to 124 (ER), and Asp-174.

It belongs to the methyltransferase superfamily. RsmJ family.

The protein resides in the cytoplasm. It carries out the reaction guanosine(1516) in 16S rRNA + S-adenosyl-L-methionine = N(2)-methylguanosine(1516) in 16S rRNA + S-adenosyl-L-homocysteine + H(+). In terms of biological role, specifically methylates the guanosine in position 1516 of 16S rRNA. The polypeptide is Ribosomal RNA small subunit methyltransferase J (Coxiella burnetii (strain Dugway 5J108-111)).